Here is a 402-residue protein sequence, read N- to C-terminus: 1-deoxy-D-xylulose 5-phosphate reductoisomerase (402 aa).

7 residues coordinate NADPH: Thr25, Gly26, Ser27, Val28, Arg52, Asn53, and Asn136. Lys137 is a 1-deoxy-D-xylulose 5-phosphate binding site. Glu138 is a binding site for NADPH. A Mn(2+)-binding site is contributed by Asp162. Residues Ser163, Glu164, Ser188, and His211 each coordinate 1-deoxy-D-xylulose 5-phosphate. Glu164 is a binding site for Mn(2+). Position 217 (Gly217) interacts with NADPH. Ser224, Asn229, Lys230, and Glu233 together coordinate 1-deoxy-D-xylulose 5-phosphate. A Mn(2+)-binding site is contributed by Glu233.

Belongs to the DXR family. Requires Mg(2+) as cofactor. Mn(2+) is required as a cofactor.

The catalysed reaction is 2-C-methyl-D-erythritol 4-phosphate + NADP(+) = 1-deoxy-D-xylulose 5-phosphate + NADPH + H(+). It participates in isoprenoid biosynthesis; isopentenyl diphosphate biosynthesis via DXP pathway; isopentenyl diphosphate from 1-deoxy-D-xylulose 5-phosphate: step 1/6. Its function is as follows. Catalyzes the NADPH-dependent rearrangement and reduction of 1-deoxy-D-xylulose-5-phosphate (DXP) to 2-C-methyl-D-erythritol 4-phosphate (MEP). This Rhodospirillum centenum (strain ATCC 51521 / SW) protein is 1-deoxy-D-xylulose 5-phosphate reductoisomerase.